The chain runs to 201 residues: uncharacterized protein (201 aa).

The tract at residues 121–141 is disordered; it reads HHRTRPGRGPGPRPGGSAMAG.

This is an uncharacterized protein from Mycobacterium tuberculosis (strain ATCC 25618 / H37Rv).